We begin with the raw amino-acid sequence, 1273 residues long: Cullin-associated NEDD8-dissociated protein 2 (1273 aa).

Residue serine 2 is modified to N-acetylserine. HEAT repeat units lie at residues 2–36 (STGAFYISSLLEKMTSSDKDFSPKSLGGSRVLDPL), 37–74 (PWLQILAAITDWISGDRTQDLALPRFMATSDLMSELQK), 82–119 (DSERKVVRTLLRLLEDRSGEVQNLAVKCLGPLVGKVKE), 121–157 (QVENIVDTLCANMRSDKEQLRDIAGIGLKTVLSELPP), 167–205 (SVCRKITGQLTSAIAQQEDVAVQLEALDILSDMLSRLGA), 209–246 (TFHASLLHCLLPQLSSPRLAVRKRTVVALGHLAAACST), 248–284 (LFVELADHLVDRLPGPRAPASPAAIRTLIQCLGSVGR), 292–329 (AHLDRLMPLVEEFCNLDDDELRESCLQAFEAFLRKCPK), 364–405 (TEDS…SRPD), 409–446 (DFHCTLAPALIRCFKEREENVKADIFGAYIMLLRHTRP), 469–506 (AQVPLVMKALQRQLKDRNVRTRQGCFNLFTELAGVLPG), 554–591 (PHLPTLLPPVMACVADPFYKVAAEALLVLQELVRTLWP), 602–641 (PYVGEMSTATLARLRATDLDQEVKERAISCVGHLVGHLGD), 685–722 (PILAEALPILASFLRKNQRALRLATLAALDALAQSQGL), 727–764 (PAVRSVLAELPALVSENDMHVAQLAVDFLTTVTQTQPA), 768–807 (EVSGPVLEELLQLLHSPLLPAGVLAATEGFLQALVGTRPP), 809–850 (VEYS…ALSA), 894–931 (GPQRELKTVLLEALGSPSEDVRAAAAYALGRVGAGNLP), 933–968 (FLPFLLAQIEAQPRRQYLLLHALREALGAAQPDNLK), 970–1003 (YVEDVWALLFQRCESPEEGTRCVVAECIGKLVFV), 1004–1040 (NPPFLLPRFRKQLAAGQPYTRSTVITAVKFLISDQPH), 1044–1081 (PLLKSFIAEFMESLQDPDLNVRRATLTFFNSAVHNKPS), 1085–1121 (DLLDDILPLLYQETKIRRDLIREVEMGPFKHTVDDGL), 1142–1178 (LDICEFLNHVEDGLKDHYDIRMLTFIMLARLAALCPA), 1194–1231 (TCTAKVKAGSVKQELEKQDELKRSAMRAVAALMTNPEV), and 1241–1273 (STQIRSNPELATLFESIQKDTASGPSMDSMELS). Residues 352 to 383 (YNHDSDEEEQMETEDSEFSEQESEDEYSDDDD) are disordered. Acidic residues predominate over residues 356-383 (SDEEEQMETEDSEFSEQESEDEYSDDDD).

This sequence belongs to the CAND family. In terms of assembly, binds TBP, CNOT3 and UBE3C. Post-translationally, ubiquitinated and targeted for proteasomal degradation. As to expression, detected in heart and skeletal muscle.

The protein localises to the nucleus. In terms of biological role, probable assembly factor of SCF (SKP1-CUL1-F-box protein) E3 ubiquitin ligase complexes that promotes the exchange of the substrate-recognition F-box subunit in SCF complexes, thereby playing a key role in the cellular repertoire of SCF complexes. The chain is Cullin-associated NEDD8-dissociated protein 2 (Cand2) from Rattus norvegicus (Rat).